The primary structure comprises 97 residues: Aspartyl/glutamyl-tRNA(Asn/Gln) amidotransferase subunit C (97 aa).

Belongs to the GatC family. Heterotrimer of A, B and C subunits.

The enzyme catalyses L-glutamyl-tRNA(Gln) + L-glutamine + ATP + H2O = L-glutaminyl-tRNA(Gln) + L-glutamate + ADP + phosphate + H(+). It carries out the reaction L-aspartyl-tRNA(Asn) + L-glutamine + ATP + H2O = L-asparaginyl-tRNA(Asn) + L-glutamate + ADP + phosphate + 2 H(+). Allows the formation of correctly charged Asn-tRNA(Asn) or Gln-tRNA(Gln) through the transamidation of misacylated Asp-tRNA(Asn) or Glu-tRNA(Gln) in organisms which lack either or both of asparaginyl-tRNA or glutaminyl-tRNA synthetases. The reaction takes place in the presence of glutamine and ATP through an activated phospho-Asp-tRNA(Asn) or phospho-Glu-tRNA(Gln). The polypeptide is Aspartyl/glutamyl-tRNA(Asn/Gln) amidotransferase subunit C (Sulfolobus acidocaldarius (strain ATCC 33909 / DSM 639 / JCM 8929 / NBRC 15157 / NCIMB 11770)).